The sequence spans 321 residues: Isopenicillin N synthase (321 aa).

Residues 1 to 42 (MPVLMPSADVPTIDISPQLFGTDPTPRRTSRGRSTRPARGSG) form a disordered region. Residues arginine 87, tyrosine 91, and tyrosine 188 each contribute to the isopenicillin N site. Arginine 87, tyrosine 91, tyrosine 188, histidine 213, and aspartate 215 together coordinate N-[(5S)-5-amino-5-carboxypentanoyl]-L-cysteinyl-D-valine. One can recognise a Fe2OG dioxygenase domain in the interval 179–287 (TLSAVSMIRY…RLSLPFFLHA (109 aa)). Residues histidine 213, aspartate 215, and histidine 269 each contribute to the Fe(2+) site. Arginine 278 is a 2-oxoglutarate binding site. Serine 280 lines the isopenicillin N pocket. Serine 280 provides a ligand contact to N-[(5S)-5-amino-5-carboxypentanoyl]-L-cysteinyl-D-valine.

This sequence belongs to the iron/ascorbate-dependent oxidoreductase family. Fe cation serves as cofactor. Requires L-ascorbate as cofactor.

The enzyme catalyses N-[(5S)-5-amino-5-carboxypentanoyl]-L-cysteinyl-D-valine + O2 = isopenicillin N + 2 H2O. It functions in the pathway antibiotic biosynthesis; penicillin G biosynthesis; penicillin G from L-alpha-aminoadipate and L-cysteine and L-valine: step 2/3. Its function is as follows. Removes, in the presence of oxygen, 4 hydrogen atoms from delta-L-(alpha-aminoadipyl)-L-cysteinyl-D-valine (ACV) to form the azetidinone and thiazolidine rings of isopenicillin. The sequence is that of Isopenicillin N synthase (pcbC) from Streptantibioticus cattleyicolor (Streptomyces cattleya).